The chain runs to 269 residues: Glutamate racemase (269 aa).

Substrate is bound by residues 14 to 15 and 46 to 47; these read DS and YS. Cys78 acts as the Proton donor/acceptor in catalysis. 79-80 contributes to the substrate binding site; sequence NT. Cys189 acts as the Proton donor/acceptor in catalysis. 190–191 is a substrate binding site; that stretch reads TH.

Belongs to the aspartate/glutamate racemases family.

The enzyme catalyses L-glutamate = D-glutamate. It functions in the pathway cell wall biogenesis; peptidoglycan biosynthesis. Its function is as follows. Provides the (R)-glutamate required for cell wall biosynthesis. This Haemophilus influenzae (strain 86-028NP) protein is Glutamate racemase.